The chain runs to 634 residues: Carbon monoxide dehydrogenase 2 (634 aa).

Cysteine 44, cysteine 53, cysteine 56, cysteine 61, and cysteine 73 together coordinate [4Fe-4S] cluster. Positions 264, 343, 453, 484, and 525 each coordinate [Ni-4Fe-5S] cluster.

Belongs to the Ni-containing carbon monoxide dehydrogenase family. As to quaternary structure, homodimer. It depends on [4Fe-4S] cluster as a cofactor. Requires [Ni-4Fe-5S] cluster as cofactor.

The enzyme catalyses CO + 2 oxidized [2Fe-2S]-[ferredoxin] + H2O = 2 reduced [2Fe-2S]-[ferredoxin] + CO2 + 2 H(+). Functionally, CODH oxidizes carbon monoxide coupled, via CooF, to the reduction of a hydrogen cation by a hydrogenase (possibly CooH). The chain is Carbon monoxide dehydrogenase 2 (cooS2) from Methanosarcina mazei (strain ATCC BAA-159 / DSM 3647 / Goe1 / Go1 / JCM 11833 / OCM 88) (Methanosarcina frisia).